Here is an 81-residue protein sequence, read N- to C-terminus: Cytotoxin 2b (81 aa).

An N-terminal signal peptide occupies residues 1–21; it reads MKTLLLTLVVVTTVCLDLGYT. Intrachain disulfides connect Cys-24–Cys-42, Cys-35–Cys-59, Cys-63–Cys-74, and Cys-75–Cys-80.

The protein belongs to the three-finger toxin family. Short-chain subfamily. Type IA cytotoxin sub-subfamily. In terms of assembly, monomer in solution; Homodimer and oligomer in the presence of negatively charged lipids forming a pore with a size ranging between 20 and 30 Angstroms. As to expression, expressed by the venom gland.

The protein localises to the secreted. The protein resides in the target cell membrane. Its function is as follows. Shows cytolytic activity on many different cells by forming pore in lipid membranes. In vivo, increases heart rate or kills the animal by cardiac arrest. In addition, it binds to heparin with high affinity, interacts with Kv channel-interacting protein 1 (KCNIP1) in a calcium-independent manner, and binds to integrin alpha-V/beta-3 (ITGAV/ITGB3) with moderate affinity. This is Cytotoxin 2b from Naja sputatrix (Malayan spitting cobra).